Consider the following 632-residue polypeptide: Asparagine synthetase [glutamine-hydrolyzing] 1 (632 aa).

Cys2 serves as the catalytic For GATase activity. One can recognise a Glutamine amidotransferase type-2 domain in the interval Cys2 to Asp214. L-glutamine is bound by residues Arg52–Ile56, Asn77–Glu79, and Asp102. ATP contacts are provided by residues Val288 and Ser361–Gly362.

Belongs to the asparagine synthetase family.

It carries out the reaction L-aspartate + L-glutamine + ATP + H2O = L-asparagine + L-glutamate + AMP + diphosphate + H(+). Its pathway is amino-acid biosynthesis; L-asparagine biosynthesis; L-asparagine from L-aspartate (L-Gln route): step 1/1. Its function is as follows. Main asparagine synthetase in vegetative cells. This chain is Asparagine synthetase [glutamine-hydrolyzing] 1 (asnB), found in Bacillus subtilis (strain 168).